Consider the following 251-residue polypeptide: Proteasome subunit alpha type-7 (251 aa).

This sequence belongs to the peptidase T1A family. As to quaternary structure, the 26S proteasome consists of a 20S proteasome core and two 19S regulatory subunits. The 20S proteasome core is composed of 28 subunits that are arranged in four stacked rings, resulting in a barrel-shaped structure. The two end rings are each formed by seven alpha subunits, and the two central rings are each formed by seven beta subunits. The catalytic chamber with the active sites is on the inside of the barrel.

The protein localises to the cytoplasm. Its subcellular location is the nucleus. Functionally, the proteasome is a multicatalytic proteinase complex which is characterized by its ability to cleave peptides with Arg, Phe, Tyr, Leu, and Glu adjacent to the leaving group at neutral or slightly basic pH. The proteasome has an ATP-dependent proteolytic activity. This chain is Proteasome subunit alpha type-7 (psma7), found in Carassius auratus (Goldfish).